Reading from the N-terminus, the 119-residue chain is Beta-2-microglobulin (119 aa).

The signal sequence occupies residues 1–20; the sequence is MACSVVVALLALLSLSGLEA. Residues 25 to 114 form the Ig-like C1-type domain; it reads PKIQVYSRHP…VTFSTPKTVK (90 aa). The cysteines at positions 45 and 100 are disulfide-linked.

This sequence belongs to the beta-2-microglobulin family. As to quaternary structure, heterodimer of an alpha chain and a beta chain. Beta-2-microglobulin is the beta-chain of major histocompatibility complex class I molecules.

The protein resides in the secreted. Functionally, component of the class I major histocompatibility complex (MHC). Involved in the presentation of peptide antigens to the immune system. The sequence is that of Beta-2-microglobulin (B2M) from Mico emiliae (Emilia's marmoset).